A 437-amino-acid chain; its full sequence is tRNA(Ile)-lysidine synthase (437 aa).

22–27 (SGGLDS) serves as a coordination point for ATP.

This sequence belongs to the tRNA(Ile)-lysidine synthase family.

The protein localises to the cytoplasm. The enzyme catalyses cytidine(34) in tRNA(Ile2) + L-lysine + ATP = lysidine(34) in tRNA(Ile2) + AMP + diphosphate + H(+). Ligates lysine onto the cytidine present at position 34 of the AUA codon-specific tRNA(Ile) that contains the anticodon CAU, in an ATP-dependent manner. Cytidine is converted to lysidine, thus changing the amino acid specificity of the tRNA from methionine to isoleucine. The chain is tRNA(Ile)-lysidine synthase from Xylella fastidiosa (strain Temecula1 / ATCC 700964).